The sequence spans 691 residues: Hormonally up-regulated neu tumor-associated kinase homolog A (691 aa).

The 259-residue stretch at 55 to 313 (YLIGRKLGEG…IQQALANRWL (259 aa)) folds into the Protein kinase domain. Residues 61–69 (LGEGSFAKV) and Lys-84 contribute to the ATP site. The active-site Proton acceptor is Asp-179. Residues 406-425 (MNKNSYEERRSKDLEKRGEP) are compositionally biased toward basic and acidic residues. Disordered stretches follow at residues 406 to 475 (MNKN…GGLS), 499 to 518 (QSPDPRTPKIMRRQDSHSQE), 580 to 640 (FQFD…SRGR), and 655 to 679 (QVVSPKGEKPLETRMPPLHQMSPGY). Residues 440 to 453 (SHRQNACLTPQGHS) show a composition bias toward polar residues. Residues 457–470 (PVKERRSSKSERES) are compositionally biased toward basic and acidic residues. Over residues 582 to 597 (FDNTSPSKSHFNQASF) the composition is skewed to polar residues. A compositionally biased stretch (low complexity) spans 604–620 (SPSSPESMSPTSPHSPS). The span at 621–631 (CNNNISGNLGS) shows a compositional bias: polar residues.

Belongs to the protein kinase superfamily. CAMK Ser/Thr protein kinase family. SNF1 subfamily.

The enzyme catalyses L-seryl-[protein] + ATP = O-phospho-L-seryl-[protein] + ADP + H(+). It carries out the reaction L-threonyl-[protein] + ATP = O-phospho-L-threonyl-[protein] + ADP + H(+). This is Hormonally up-regulated neu tumor-associated kinase homolog A (hunk-a) from Xenopus laevis (African clawed frog).